The following is a 204-amino-acid chain: Large ribosomal subunit protein eL15 (204 aa).

This sequence belongs to the eukaryotic ribosomal protein eL15 family. As to quaternary structure, component of the large ribosomal subunit.

The protein resides in the cytoplasm. In terms of biological role, component of the large ribosomal subunit. The ribosome is a large ribonucleoprotein complex responsible for the synthesis of proteins in the cell. This chain is Large ribosomal subunit protein eL15 (rpl15), found in Megalobrama amblycephala (Chinese blunt snout bream).